The primary structure comprises 122 residues: HLLQFRKMIKKMTGKEPIVSYAFYGCYCGKGGRGKPKDATDRCCFVHDCCYEKVTGCDPKWSYYTYSLENGDIVCGGDPYCTKVKCECDKKAAICFRDNLKTYKNRYMTFPDIFCTDPTEGC.

7 disulfides stabilise this stretch: cysteine 26-cysteine 115, cysteine 28-cysteine 44, cysteine 43-cysteine 95, cysteine 49-cysteine 122, cysteine 50-cysteine 88, cysteine 57-cysteine 81, and cysteine 75-cysteine 86. Ca(2+)-binding residues include tyrosine 27, glycine 29, and glycine 31. The active site involves histidine 47. Aspartate 48 lines the Ca(2+) pocket. The active site involves aspartate 89.

The protein belongs to the phospholipase A2 family. Group II subfamily. D49 sub-subfamily. Requires Ca(2+) as cofactor. As to expression, expressed by the venom gland.

The protein localises to the secreted. It carries out the reaction a 1,2-diacyl-sn-glycero-3-phosphocholine + H2O = a 1-acyl-sn-glycero-3-phosphocholine + a fatty acid + H(+). Functionally, PLA2 catalyzes the calcium-dependent hydrolysis of the 2-acyl groups in 3-sn-phosphoglycerides. In Protobothrops flavoviridis (Habu), this protein is Basic phospholipase A2 PL-X.